A 660-amino-acid polypeptide reads, in one-letter code: MTDRIVPATLVFREDGTVVSPLYGDIYHSAAGALAQADHVFIRGNGLPERWRHERAFTIIETGFGTGCNFLATWAAWRADPSHCERLHFVSVEKHPFAREDLRRAAAHIVAYTTITTITPIAPLVDELANAWPALTPGVHRLEFDDGRITLTLVFGDALDVLPNLALRAHAFYLDGFAPSKNADLWSPAIFKSLAKLADERATFATYTSSGAVKRALDEAGFAYRKVDGFAGKRAMLVGEFAPRWRVRRHEPPRAFSTDRRDAIVIGAGLAGCAVVERLAARGWHVTLIERRERIASEASGNPAGVFHPMIARDDNLAARLSRAGFLHALHRWRALERAGHAFSRSTHGLVQLATSDDEFERMRESIDALGVPAELASALSRDDARALLRTDVAHGGWLFAQGGSISPAALAAAQCAAAGDRLSRIVGVEIARLERGGDGRWRALDASGATIAQASVVVVANAADAARIAGLRHAPTQRVRGQLTLLPPGSAPAVPLPVIGDGYVVPLANGVTLTGATYEPDDTDATPREAGHRENLERLERLLPAFSANALDAGALAGRVGFRCVASDRLPLVGELGDEAAAAREAAALTGARLRDVPRATGLYGAFGYGSRGLVWAALGAELIAAQIDGEPWPLERELAEAIDPARFLVRALRHGRVA.

Positions 1 to 242 (MTDRIVPATL…KRAMLVGEFA (242 aa)) are tRNA (mnm(5)s(2)U34)-methyltransferase. Residues 266-660 (IGAGLAGCAV…VRALRHGRVA (395 aa)) form an FAD-dependent cmnm(5)s(2)U34 oxidoreductase region.

This sequence in the N-terminal section; belongs to the methyltransferase superfamily. tRNA (mnm(5)s(2)U34)-methyltransferase family. The protein in the C-terminal section; belongs to the DAO family. The cofactor is FAD.

The protein resides in the cytoplasm. The enzyme catalyses 5-aminomethyl-2-thiouridine(34) in tRNA + S-adenosyl-L-methionine = 5-methylaminomethyl-2-thiouridine(34) in tRNA + S-adenosyl-L-homocysteine + H(+). Catalyzes the last two steps in the biosynthesis of 5-methylaminomethyl-2-thiouridine (mnm(5)s(2)U) at the wobble position (U34) in tRNA. Catalyzes the FAD-dependent demodification of cmnm(5)s(2)U34 to nm(5)s(2)U34, followed by the transfer of a methyl group from S-adenosyl-L-methionine to nm(5)s(2)U34, to form mnm(5)s(2)U34. In Burkholderia pseudomallei (strain K96243), this protein is tRNA 5-methylaminomethyl-2-thiouridine biosynthesis bifunctional protein MnmC.